The chain runs to 111 residues: Large ribosomal subunit protein uL22 (111 aa).

It belongs to the universal ribosomal protein uL22 family. Part of the 50S ribosomal subunit.

In terms of biological role, this protein binds specifically to 23S rRNA; its binding is stimulated by other ribosomal proteins, e.g. L4, L17, and L20. It is important during the early stages of 50S assembly. It makes multiple contacts with different domains of the 23S rRNA in the assembled 50S subunit and ribosome. Its function is as follows. The globular domain of the protein is located near the polypeptide exit tunnel on the outside of the subunit, while an extended beta-hairpin is found that lines the wall of the exit tunnel in the center of the 70S ribosome. The protein is Large ribosomal subunit protein uL22 of Citrifermentans bemidjiense (strain ATCC BAA-1014 / DSM 16622 / JCM 12645 / Bem) (Geobacter bemidjiensis).